A 409-amino-acid chain; its full sequence is Multifunctional CCA protein (409 aa).

ATP-binding residues include Gly-8 and Arg-11. The CTP site is built by Gly-8 and Arg-11. Mg(2+) contacts are provided by Asp-21 and Asp-23. ATP contacts are provided by Arg-91, Arg-137, and Arg-140. The CTP site is built by Arg-91, Arg-137, and Arg-140. Residues 228–329 (SGLHTLSVLE…LELLQSFDVY (102 aa)) enclose the HD domain.

The protein belongs to the tRNA nucleotidyltransferase/poly(A) polymerase family. Bacterial CCA-adding enzyme type 1 subfamily. As to quaternary structure, monomer. Can also form homodimers and oligomers. The cofactor is Mg(2+). It depends on Ni(2+) as a cofactor.

It catalyses the reaction a tRNA precursor + 2 CTP + ATP = a tRNA with a 3' CCA end + 3 diphosphate. The catalysed reaction is a tRNA with a 3' CCA end + 2 CTP + ATP = a tRNA with a 3' CCACCA end + 3 diphosphate. In terms of biological role, catalyzes the addition and repair of the essential 3'-terminal CCA sequence in tRNAs without using a nucleic acid template. Adds these three nucleotides in the order of C, C, and A to the tRNA nucleotide-73, using CTP and ATP as substrates and producing inorganic pyrophosphate. tRNA 3'-terminal CCA addition is required both for tRNA processing and repair. Also involved in tRNA surveillance by mediating tandem CCA addition to generate a CCACCA at the 3' terminus of unstable tRNAs. While stable tRNAs receive only 3'-terminal CCA, unstable tRNAs are marked with CCACCA and rapidly degraded. This Pseudomonas fluorescens (strain Pf0-1) protein is Multifunctional CCA protein.